Consider the following 324-residue polypeptide: Probable cell division protein WhiA (324 aa).

The segment at residues S275–D308 is a DNA-binding region (H-T-H motif).

It belongs to the WhiA family.

Functionally, involved in cell division and chromosome segregation. In Acidothermus cellulolyticus (strain ATCC 43068 / DSM 8971 / 11B), this protein is Probable cell division protein WhiA.